A 538-amino-acid chain; its full sequence is Chaperonin GroEL (538 aa).

Residues T29–P32, D86–T90, G413, N476–A478, and D492 each bind ATP.

This sequence belongs to the chaperonin (HSP60) family. As to quaternary structure, forms a cylinder of 14 subunits composed of two heptameric rings stacked back-to-back. Interacts with the co-chaperonin GroES.

The protein resides in the cytoplasm. The catalysed reaction is ATP + H2O + a folded polypeptide = ADP + phosphate + an unfolded polypeptide.. Functionally, together with its co-chaperonin GroES, plays an essential role in assisting protein folding. The GroEL-GroES system forms a nano-cage that allows encapsulation of the non-native substrate proteins and provides a physical environment optimized to promote and accelerate protein folding. The polypeptide is Chaperonin GroEL (Staphylococcus aureus (strain NCTC 8325 / PS 47)).